The sequence spans 292 residues: Probable endonuclease 4 (292 aa).

The Zn(2+) site is built by His-70, His-111, Glu-146, Asp-180, His-183, His-215, Asp-228, His-230, and Glu-260.

It belongs to the AP endonuclease 2 family. Zn(2+) serves as cofactor.

It catalyses the reaction Endonucleolytic cleavage to 5'-phosphooligonucleotide end-products.. Functionally, endonuclease IV plays a role in DNA repair. It cleaves phosphodiester bonds at apurinic or apyrimidinic (AP) sites, generating a 3'-hydroxyl group and a 5'-terminal sugar phosphate. The chain is Probable endonuclease 4 from Shouchella clausii (strain KSM-K16) (Alkalihalobacillus clausii).